The sequence spans 150 residues: UPF0178 protein Shewana3_1627 (150 aa).

The protein belongs to the UPF0178 family.

The protein is UPF0178 protein Shewana3_1627 of Shewanella sp. (strain ANA-3).